A 528-amino-acid chain; its full sequence is Glucose-6-phosphate isomerase (528 aa).

The active-site Proton donor is Glu322. Active-site residues include His351 and Lys455.

Belongs to the GPI family.

It localises to the cytoplasm. The catalysed reaction is alpha-D-glucose 6-phosphate = beta-D-fructose 6-phosphate. Its pathway is carbohydrate biosynthesis; gluconeogenesis. It participates in carbohydrate degradation; glycolysis; D-glyceraldehyde 3-phosphate and glycerone phosphate from D-glucose: step 2/4. Functionally, catalyzes the reversible isomerization of glucose-6-phosphate to fructose-6-phosphate. In Trichormus variabilis (strain ATCC 29413 / PCC 7937) (Anabaena variabilis), this protein is Glucose-6-phosphate isomerase.